The chain runs to 237 residues: DNA repair protein RecO (237 aa).

Belongs to the RecO family.

Functionally, involved in DNA repair and RecF pathway recombination. In Rickettsia rickettsii (strain Iowa), this protein is DNA repair protein RecO.